Reading from the N-terminus, the 333-residue chain is 4-hydroxyproline 2-epimerase (333 aa).

Cysteine 90 (proton acceptor) is an active-site residue. Substrate contacts are provided by residues 91–92 (GH), histidine 223, and aspartate 249. The active-site Proton donor is cysteine 253. 254–255 (GT) lines the substrate pocket.

The protein belongs to the proline racemase family.

The enzyme catalyses trans-4-hydroxy-L-proline = cis-4-hydroxy-D-proline. Its function is as follows. Catalyzes the epimerization of trans-4-hydroxy-L-proline (t4LHyp) to cis-4-hydroxy-D-proline (c4DHyp). Is likely involved in a degradation pathway that converts t4LHyp to alpha-ketoglutarate. Displays no proline racemase activity. The protein is 4-hydroxyproline 2-epimerase of Shewanella loihica (strain ATCC BAA-1088 / PV-4).